The chain runs to 62 residues: Short neurotoxin 2 (62 aa).

The tract at residues M1–G20 is disordered. 4 cysteine pairs are disulfide-bonded: C3-C24, C17-C41, C43-C54, and C55-C60.

It belongs to the three-finger toxin family. Short-chain subfamily. Type I alpha-neurotoxin sub-subfamily. As to expression, expressed by the venom gland.

It localises to the secreted. Binds to muscle nicotinic acetylcholine receptor (nAChR) and inhibit acetylcholine from binding to the receptor, thereby impairing neuromuscular transmission. This Oxyuranus scutellatus scutellatus (Australian taipan) protein is Short neurotoxin 2.